The sequence spans 396 residues: MIKLKSYFGEFGGMYVPQILIPALTQLEEAFISAQDDAIFQKELKYLLNNYAGRPTPLTLCRNLTKGTRAKLYLKREDLLHGGSHKTNQVLGQALLAKRMSKTEIIAETGAGQHGVAVSIAASLLGLKCRIYMGSKDIKRQKLNVLRMQLMGTQVIPVHRGSETLKDACNEAMREWSKTYEYTHYMLGTAAGPHPFPTIVREFQRIIGKETYKQIQKYEQCLPDAIIACVGGGSNAIGIFSDFVDIPSVQLLGVEAGGLGINTEYHGAALQHGSIGIYFGMKTSILQSSEGQVKNSYSVSAGLDFPSVGPEHVYLKNTGRVQYVSINDIEAITAFKKLSIHEGIIPALESAHALAHALKIIQKQPDKAQILVVNLSGRGDKDISTVHNALQKERDK.

N6-(pyridoxal phosphate)lysine is present on K86.

This sequence belongs to the TrpB family. As to quaternary structure, tetramer of two alpha and two beta chains. Requires pyridoxal 5'-phosphate as cofactor.

The catalysed reaction is (1S,2R)-1-C-(indol-3-yl)glycerol 3-phosphate + L-serine = D-glyceraldehyde 3-phosphate + L-tryptophan + H2O. The protein operates within amino-acid biosynthesis; L-tryptophan biosynthesis; L-tryptophan from chorismate: step 5/5. Functionally, the beta subunit is responsible for the synthesis of L-tryptophan from indole and L-serine. The polypeptide is Tryptophan synthase beta chain (Blochmanniella pennsylvanica (strain BPEN)).